The following is a 714-amino-acid chain: ATP-dependent RNA helicase MSS116, mitochondrial (714 aa).

The N-terminal 37 residues, 1-37 (MSWVRSVAIRTALCRQVRSRYQSYGSTRLFSSSLRSW), are a transit peptide targeting the mitochondrion. Residues 74–102 (SLEASRKFDKSIFRGLYNSKMKNMTVVQQ) carry the Q motif motif. One can recognise a Helicase ATP-binding domain in the interval 106 to 296 (MPMMDTKTGV…HETIGKEYEY (191 aa)). Position 119–126 (119–126 (AKTGTGKT)) interacts with ATP. The DEAD box signature appears at 234 to 237 (DEAD). The region spanning 335–498 (HINDKYFKAI…TSPDHFQRLG (164 aa)) is the Helicase C-terminal domain. Residues 581–714 (SSNDRKSKRT…TYGRRDDSDE (134 aa)) form a disordered region. 3 stretches are compositionally biased toward basic and acidic residues: residues 619–640 (RSFD…DRKS), 656–671 (YGDK…DKSY), and 679–697 (SNDR…EKRN).

It belongs to the DEAD box helicase family. DDX18/HAS1 subfamily.

It is found in the mitochondrion matrix. It carries out the reaction ATP + H2O = ADP + phosphate + H(+). In terms of biological role, ATP-dependent RNA helicase required for mitochondrial splicing of group I and II introns. Also required for efficient mitochondrial translation. The chain is ATP-dependent RNA helicase MSS116, mitochondrial (MSS116) from Meyerozyma guilliermondii (strain ATCC 6260 / CBS 566 / DSM 6381 / JCM 1539 / NBRC 10279 / NRRL Y-324) (Yeast).